We begin with the raw amino-acid sequence, 149 residues long: Nucleoside diphosphate kinase (149 aa).

Residues Lys-9, Phe-57, Arg-85, Thr-91, Arg-102, and Asn-112 each coordinate ATP. His-115 acts as the Pros-phosphohistidine intermediate in catalysis.

The protein belongs to the NDK family. In terms of assembly, homotetramer. It depends on Mg(2+) as a cofactor.

Its subcellular location is the cytoplasm. The catalysed reaction is a 2'-deoxyribonucleoside 5'-diphosphate + ATP = a 2'-deoxyribonucleoside 5'-triphosphate + ADP. It catalyses the reaction a ribonucleoside 5'-diphosphate + ATP = a ribonucleoside 5'-triphosphate + ADP. In terms of biological role, major role in the synthesis of nucleoside triphosphates other than ATP. The ATP gamma phosphate is transferred to the NDP beta phosphate via a ping-pong mechanism, using a phosphorylated active-site intermediate. In Thermomicrobium roseum (strain ATCC 27502 / DSM 5159 / P-2), this protein is Nucleoside diphosphate kinase.